The following is a 310-amino-acid chain: Ninja-family protein 3 (310 aa).

3 disordered regions span residues Met1–Asp29, Ser68–Gln140, and Asp156–Pro215. Basic and acidic residues predominate over residues Glu99–Ser108. 2 stretches are compositionally biased toward polar residues: residues Asp156–Glu166 and Lys176–Ser193.

Belongs to the Ninja family.

It localises to the nucleus. In Triticum aestivum (Wheat), this protein is Ninja-family protein 3 (AFP-D1).